The chain runs to 287 residues: Protease HtpX homolog (287 aa).

Helical transmembrane passes span 5-25 (IRTG…GYWI) and 28-48 (GAGA…AYWV). H131 lines the Zn(2+) pocket. E132 is a catalytic residue. H135 is a Zn(2+) binding site. Helical transmembrane passes span 146 to 166 (VTAT…FFGG) and 174 to 194 (PFAG…ATLV). E203 is a binding site for Zn(2+).

It belongs to the peptidase M48B family. Zn(2+) serves as cofactor.

The protein localises to the cell inner membrane. The protein is Protease HtpX homolog of Acidiphilium cryptum (strain JF-5).